Here is a 469-residue protein sequence, read N- to C-terminus: Bile acid receptor (469 aa).

Lysine 119 participates in a covalent cross-link: Glycyl lysine isopeptide (Lys-Gly) (interchain with G-Cter in SUMO1). Residues 121–196 constitute a DNA-binding region (nuclear receptor); it reads DELCVVCGDR…MGMLAECLLT (76 aa). The NR C4-type zinc-finger motif lies at 124-144; the sequence is CVVCGDRASGYHYNALTCEGC. 2 positions are modified to phosphoserine; by PKC/PRKCA: serine 132 and serine 151. Lysine 154 is modified (N6-acetyllysine; by EP300). The NR C4-type zinc-finger motif lies at 160-184; that stretch reads CKNGGNCVMDMYMRRKCQDCRLRKC. An N6-methyllysine; by SETD7 modification is found at lysine 203. Residue lysine 210 is modified to N6-acetyllysine; by EP300. Residues 245–469 form the NR LBD domain; the sequence is DQQTLLDYIM…PLLCEIWDVQ (225 aa). A Glycyl lysine isopeptide (Lys-Gly) (interchain with G-Cter in SUMO1) cross-link involves residue lysine 272. Arginine 328 provides a ligand contact to 3beta,7beta-dihydroxy-5beta-cholan-24-oate. Residues arginine 328, tyrosine 358, and tyrosine 366 each coordinate chenodeoxycholate. Residue tyrosine 366 participates in 3beta,7beta-dihydroxy-5beta-cholan-24-oate binding. Residue threonine 439 is modified to Phosphothreonine; by PKC/PRKCZ. Residue histidine 444 participates in chenodeoxycholate binding.

This sequence belongs to the nuclear hormone receptor family. NR1 subfamily. Heterodimer with RXRA; the heterodimerization enhances the binding affinity for LXXLL motifs from coactivators. Binds DNA predominantly as a heterodimer with RXRA. After activation by agonist binding interacts with coactivators. Interacts with NCOA1, NCOA2, PPARGC1A, CARM1, SETD7, PRMT1, GPS2, SMARCA4 and MED1, EP300 and SMARCD1. Interacts with XRCC5 and XRCC6; decreasing NR1H4/FXR transactivation activity towards ABCB11/BSEP. Interacts with PAGR1 AND NCOA6; indicative for an association with an MLL2/MLL3 complex (ASCOM). Post-translationally, acetylated by EP300. Lys-210 as is the major acetylation site for EP300; the dynamicly regulated acetylation inhibits heterodimerization with RXRA and transactivation activity. Deacetylated by SIRT1. In terms of processing, methylation may increase transactivation of target genes. Phosphorylation by PKC/PRKCA increases transactivation activity by promoting association with PPARGC1A. Post-translationally, sumoylated upon ligand binding.

It is found in the nucleus. In terms of biological role, ligand-activated transcription factor. Receptor for bile acids (BAs) such as chenodeoxycholic acid (CDCA), lithocholic acid, deoxycholic acid (DCA) and allocholic acid (ACA). Plays a essential role in BA homeostasis through the regulation of genes involved in BA synthesis, conjugation and enterohepatic circulation. Also regulates lipid and glucose homeostasis and is involved innate immune response. The FXR-RXR heterodimer binds predominantly to farnesoid X receptor response elements (FXREs) containing two inverted repeats of the consensus sequence 5'-AGGTCA-3' in which the monomers are spaced by 1 nucleotide (IR-1) but also to tandem repeat DR1 sites with lower affinity, and can be activated by either FXR or RXR-specific ligands. It is proposed that monomeric nuclear receptors such as NR5A2/LRH-1 bound to coregulatory nuclear responsive element (NRE) halfsites located in close proximity to FXREs modulate transcriptional activity. In the liver activates transcription of the corepressor NR0B2 thereby indirectly inhibiting CYP7A1 and CYP8B1 (involved in BA synthesis) implicating at least in part histone demethylase KDM1A resulting in epigenomic repression, and SLC10A1/NTCP (involved in hepatic uptake of conjugated BAs). Activates transcription of the repressor MAFG (involved in regulation of BA synthesis). Activates transcription of SLC27A5/BACS and BAAT (involved in BA conjugation), ABCB11/BSEP (involved in bile salt export) by directly recruiting histone methyltransferase CARM1, and ABCC2/MRP2 (involved in secretion of conjugated BAs) and ABCB4 (involved in secretion of phosphatidylcholine in the small intestine). Activates transcription of SLC27A5/BACS and BAAT (involved in BA conjugation), ABCB11/BSEP (involved in bile salt export) by directly recruiting histone methyltransferase CARM1, and ABCC2/MRP2 (involved in secretion of conjugated BAs) and ABCB4 (involved in secretion of phosphatidylcholine in the small intestine). In the intestine activates FGF19 expression and secretion leading to hepatic CYP7A1 repression. The function also involves the coordinated induction of hepatic KLB/beta-klotho expression. Regulates transcription of liver UGT2B4 and SULT2A1 involved in BA detoxification; binding to the UGT2B4 promoter seems to imply a monomeric transactivation independent of RXRA. Modulates lipid homeostasis by activating liver NR0B2/SHP-mediated repression of SREBF1 (involved in de novo lipogenesis), expression of PLTP (involved in HDL formation), SCARB1 (involved in HDL hepatic uptake), APOE, APOC1, APOC4, PPARA (involved in beta-oxidation of fatty acids), VLDLR and SDC1 (involved in the hepatic uptake of LDL and IDL remnants), and inhibiting expression of MTTP (involved in VLDL assembly). Increases expression of APOC2 (promoting lipoprotein lipase activity implicated in triglyceride clearance). Transrepresses APOA1 involving a monomeric competition with NR2A1 for binding to a DR1 element. Also reduces triglyceride clearance by inhibiting expression of ANGPTL3 and APOC3 (both involved in inhibition of lipoprotein lipase). Involved in glucose homeostasis by modulating hepatic gluconeogenesis through activation of NR0B2/SHP-mediated repression of respective genes. Modulates glycogen synthesis (inducing phosphorylation of glycogen synthase kinase-3). Modulates glucose-stimulated insulin secretion and is involved in insulin resistance. Involved in intestinal innate immunity. Plays a role in protecting the distal small intestine against bacterial overgrowth and preservation of the epithelial barrier. Down-regulates inflammatory cytokine expression in several types of immune cells including macrophages and mononuclear cells. Mediates trans-repression of TLR4-induced cytokine expression; the function seems to require its sumoylation and prevents N-CoR nuclear receptor corepressor clearance from target genes such as IL1B and NOS2. Involved in the TLR9-mediated protective mechanism in intestinal inflammation. Plays an anti-inflammatory role in liver inflammation; proposed to inhibit pro-inflammatory (but not antiapoptotic) NF-kappa-B signaling. This chain is Bile acid receptor (Nr1h4), found in Rattus norvegicus (Rat).